A 338-amino-acid polypeptide reads, in one-letter code: NADPH dehydrogenase (338 aa).

An FMN-binding site is contributed by 22-25 (SPMC). Tyr27 contributes to the substrate binding site. Residues Ala59 and Gln101 each coordinate FMN. 163–166 (HAAH) serves as a coordination point for substrate. FMN is bound by residues Arg214 and 306-307 (GR).

This sequence belongs to the NADH:flavin oxidoreductase/NADH oxidase family. NamA subfamily. Homotetramer. It depends on FMN as a cofactor.

It carries out the reaction A + NADPH + H(+) = AH2 + NADP(+). Functionally, catalyzes the reduction of the double bond of an array of alpha,beta-unsaturated aldehydes and ketones. It also reduces the nitro group of nitroester and nitroaromatic compounds. It could have a role in detoxification processes. The protein is NADPH dehydrogenase of Listeria innocua serovar 6a (strain ATCC BAA-680 / CLIP 11262).